Reading from the N-terminus, the 158-residue chain is Serine-protein kinase RsbW (158 aa).

Belongs to the anti-sigma-factor family.

It carries out the reaction L-seryl-[protein] + ATP = O-phospho-L-seryl-[protein] + ADP + H(+). The catalysed reaction is L-threonyl-[protein] + ATP = O-phospho-L-threonyl-[protein] + ADP + H(+). Functionally, negative regulator of sigma-B activity. Phosphorylates and inactivates its specific antagonist protein, RsbV. Upon phosphorylation of RsbV, RsbW is released and binds to sigma-B, thereby blocking its ability to form an RNA polymerase holoenzyme (E-sigma-B). In Oceanobacillus iheyensis (strain DSM 14371 / CIP 107618 / JCM 11309 / KCTC 3954 / HTE831), this protein is Serine-protein kinase RsbW.